Here is a 122-residue protein sequence, read N- to C-terminus: Large ribosomal subunit protein uL14c (122 aa).

The protein belongs to the universal ribosomal protein uL14 family. In terms of assembly, part of the 50S ribosomal subunit.

It is found in the plastid. It localises to the chloroplast. In terms of biological role, binds to 23S rRNA. The sequence is that of Large ribosomal subunit protein uL14c from Marchantia polymorpha (Common liverwort).